The sequence spans 612 residues: 1,8-cineole synthase, chloroplastic (612 aa).

Residues 1 to 52 (MALVSGAPLASRSCLNKSLISSTHELKPLRRTILPTLRWKSATPSINMCLTT) constitute a chloroplast transit peptide. Residues aspartate 363, aspartate 367, and aspartate 515 each coordinate Mg(2+). The DDXXD motif signature appears at 363–367 (DDIYD).

This sequence belongs to the terpene synthase family. Tpsd subfamily. Requires Mg(2+) as cofactor. It depends on Mn(2+) as a cofactor.

The protein localises to the plastid. The protein resides in the chloroplast. The catalysed reaction is (2E)-geranyl diphosphate + H2O = 1,8-cineole + diphosphate. It participates in terpene metabolism; oleoresin biosynthesis. Its function is as follows. Terpene synthase (TPS) involved in the biosynthesis of monoterpene natural products included in conifer oleoresin secretions and volatile emissions; these compounds contribute to biotic and abiotic stress defense against herbivores and pathogens. Catalyzes the conversion of (2E)-geranyl diphosphate (GPP) to 1,8-cineole. The chain is 1,8-cineole synthase, chloroplastic from Picea engelmannii x Picea glauca (Hybrid white spruce).